A 58-amino-acid polypeptide reads, in one-letter code: Sperm protamine P1 (58 aa).

The interval 1–58 is disordered; sequence MARYRRRSRSRSRSRYGRRRRRSRSRRRRSRRRRRRRGRRGRGYHRRSPHRRRRRRRR.

It belongs to the protamine P1 family. In terms of tissue distribution, testis.

The protein resides in the nucleus. The protein localises to the chromosome. Protamines substitute for histones in the chromatin of sperm during the haploid phase of spermatogenesis. They compact sperm DNA into a highly condensed, stable and inactive complex. This Monodelphis domestica (Gray short-tailed opossum) protein is Sperm protamine P1 (PRM1).